The following is a 261-amino-acid chain: MKILICNDDGYQASGIIALYEALKIVADVEVVAPEQNNSAKSNALTLHSPMYVQTAANGFRYINGTPADCVHIALTGLLGYRPDLVVSGINNGANMGDDTIYSGTVGAAMEGYLFGIPSIAFSQTEKGWAHIDVAARRARELVEQLMPSLEVVAEGAQPALAPWLLNVNIPNLPDDQIQGVKVARLGRRHAAERVITQTSPRGETMYWIGGAGPAKEAGEGTDFYATSQKFVSITPLHVDLTDHERLPYWEQAAARLTQAH.

A divalent metal cation-binding residues include D8, D9, S39, and N91.

It belongs to the SurE nucleotidase family. A divalent metal cation serves as cofactor.

It localises to the cytoplasm. It carries out the reaction a ribonucleoside 5'-phosphate + H2O = a ribonucleoside + phosphate. Its function is as follows. Nucleotidase that shows phosphatase activity on nucleoside 5'-monophosphates. This chain is 5'-nucleotidase SurE, found in Polaromonas sp. (strain JS666 / ATCC BAA-500).